The sequence spans 355 residues: NADH-quinone oxidoreductase subunit H (355 aa).

8 consecutive transmembrane segments (helical) span residues 25-45 (VVRI…LILW), 91-111 (WLYL…WAVI), 126-146 (LLYA…AGWA), 170-190 (MGFA…SEIV), 205-225 (FLSW…ISGI), 253-273 (MAFA…SALA), 290-310 (FIPG…VFIW), and 330-350 (VFLP…MSPL).

It belongs to the complex I subunit 1 family. NDH-1 is composed of 14 different subunits. Subunits NuoA, H, J, K, L, M, N constitute the membrane sector of the complex.

It is found in the cell inner membrane. The enzyme catalyses a quinone + NADH + 5 H(+)(in) = a quinol + NAD(+) + 4 H(+)(out). NDH-1 shuttles electrons from NADH, via FMN and iron-sulfur (Fe-S) centers, to quinones in the respiratory chain. The immediate electron acceptor for the enzyme in this species is believed to be ubiquinone. Couples the redox reaction to proton translocation (for every two electrons transferred, four hydrogen ions are translocated across the cytoplasmic membrane), and thus conserves the redox energy in a proton gradient. This subunit may bind ubiquinone. The chain is NADH-quinone oxidoreductase subunit H from Burkholderia cenocepacia (strain ATCC BAA-245 / DSM 16553 / LMG 16656 / NCTC 13227 / J2315 / CF5610) (Burkholderia cepacia (strain J2315)).